An 836-amino-acid chain; its full sequence is uncharacterized protein (836 aa).

Disordered stretches follow at residues 1–25, 692–718, and 789–836; these read MDST…NEEE, DSRS…NNQR, and ESSG…GYAS. Composition is skewed to polar residues over residues 789-799 and 825-836; these read ESSGINVSNTR and IDSSSAQNGYAS.

The protein resides in the nucleus. This is an uncharacterized protein from Schizosaccharomyces pombe (strain 972 / ATCC 24843) (Fission yeast).